We begin with the raw amino-acid sequence, 142 residues long: Large ribosomal subunit protein uL11 (142 aa).

It belongs to the universal ribosomal protein uL11 family. Part of the ribosomal stalk of the 50S ribosomal subunit. Interacts with L10 and the large rRNA to form the base of the stalk. L10 forms an elongated spine to which L12 dimers bind in a sequential fashion forming a multimeric L10(L12)X complex. Post-translationally, one or more lysine residues are methylated.

Its function is as follows. Forms part of the ribosomal stalk which helps the ribosome interact with GTP-bound translation factors. The polypeptide is Large ribosomal subunit protein uL11 (Vibrio vulnificus (strain CMCP6)).